A 268-amino-acid chain; its full sequence is Ribosomal RNA small subunit methyltransferase A (268 aa).

S-adenosyl-L-methionine is bound by residues asparagine 10, isoleucine 12, glycine 37, glutamate 58, aspartate 83, and asparagine 107.

The protein belongs to the class I-like SAM-binding methyltransferase superfamily. rRNA adenine N(6)-methyltransferase family. RsmA subfamily.

It localises to the cytoplasm. The catalysed reaction is adenosine(1518)/adenosine(1519) in 16S rRNA + 4 S-adenosyl-L-methionine = N(6)-dimethyladenosine(1518)/N(6)-dimethyladenosine(1519) in 16S rRNA + 4 S-adenosyl-L-homocysteine + 4 H(+). Its function is as follows. Specifically dimethylates two adjacent adenosines (A1518 and A1519) in the loop of a conserved hairpin near the 3'-end of 16S rRNA in the 30S particle. May play a critical role in biogenesis of 30S subunits. This Caldanaerobacter subterraneus subsp. tengcongensis (strain DSM 15242 / JCM 11007 / NBRC 100824 / MB4) (Thermoanaerobacter tengcongensis) protein is Ribosomal RNA small subunit methyltransferase A.